A 223-amino-acid chain; its full sequence is Glycerol-3-phosphate acyltransferase (223 aa).

Transmembrane regions (helical) follow at residues 2–22, 52–72, 78–98, 112–132, and 153–173; these read LEIL…GLVI, WGVA…WLAF, PVFV…SCFM, IFLP…MLVI, and LAVS…AVVV. The disordered stretch occupies residues 191 to 223; that stretch reads WLKSKNKGAAAGNAAEGDDTQNMNPQDAGRKDG.

It belongs to the PlsY family. Probably interacts with PlsX.

The protein localises to the cell inner membrane. The catalysed reaction is an acyl phosphate + sn-glycerol 3-phosphate = a 1-acyl-sn-glycero-3-phosphate + phosphate. The protein operates within lipid metabolism; phospholipid metabolism. Catalyzes the transfer of an acyl group from acyl-phosphate (acyl-PO(4)) to glycerol-3-phosphate (G3P) to form lysophosphatidic acid (LPA). This enzyme utilizes acyl-phosphate as fatty acyl donor, but not acyl-CoA or acyl-ACP. This Desulfovibrio desulfuricans (strain ATCC 27774 / DSM 6949 / MB) protein is Glycerol-3-phosphate acyltransferase.